A 435-amino-acid chain; its full sequence is Serine--tRNA ligase (435 aa).

242–244 (TAE) serves as a coordination point for L-serine. 273-275 (RSE) lines the ATP pocket. L-serine is bound at residue glutamate 296. Residue 360–363 (EISS) coordinates ATP. Serine 396 is a binding site for L-serine.

It belongs to the class-II aminoacyl-tRNA synthetase family. Type-1 seryl-tRNA synthetase subfamily. Homodimer. The tRNA molecule binds across the dimer.

Its subcellular location is the cytoplasm. The enzyme catalyses tRNA(Ser) + L-serine + ATP = L-seryl-tRNA(Ser) + AMP + diphosphate + H(+). It catalyses the reaction tRNA(Sec) + L-serine + ATP = L-seryl-tRNA(Sec) + AMP + diphosphate + H(+). The protein operates within aminoacyl-tRNA biosynthesis; selenocysteinyl-tRNA(Sec) biosynthesis; L-seryl-tRNA(Sec) from L-serine and tRNA(Sec): step 1/1. In terms of biological role, catalyzes the attachment of serine to tRNA(Ser). Is also able to aminoacylate tRNA(Sec) with serine, to form the misacylated tRNA L-seryl-tRNA(Sec), which will be further converted into selenocysteinyl-tRNA(Sec). The chain is Serine--tRNA ligase from Vibrio campbellii (strain ATCC BAA-1116).